Reading from the N-terminus, the 504-residue chain is MEEFQRYLELDRFRQHDFLYPLLFREYIYALAHDHGFNSYMLLENIGYDNKSSLLIVKRLITRMYQHNYLMISANDSNQNQFFGYNKNLHSQIISEGFAVIVEIPFSLRLISSFEGAEIVISYKLRSIHSIFPFLEDKLPHLNYTTDVRIPYPIHLEILIQTLRSRVKDASYLHLLRFFLHQYSNWNILIITTKSISIFSKSNPRFFLFLYNSHICQYESIFLFLGNQSSHLRLISSGVLFERLYLHKKIEHFAEVFANDFPVIPCFLKDPFMHYVRYQGKSILASKDTPLLMNKWKYYLVNLWQCHFYVWSHPGRIHINQLSKHSLDFWGYFSSVRLNPSVVRSQMLENSFLINNAPKKLDIIVPIIPLIGSLAKARFCNALGHPISKLTRADLSDFEILNRFLRICRNLSHYYSGSSKKKSMYRIKYILRLSCVKTLARKHKSTARAFLKKVGSEFVQEFFTEEEEFLSLIFPRTSFTLRRLYRGRVWYLDIIFINGLANHE.

This sequence belongs to the intron maturase 2 family. MatK subfamily.

It is found in the plastid. The protein localises to the chloroplast. Usually encoded in the trnK tRNA gene intron. Probably assists in splicing its own and other chloroplast group II introns. The protein is Maturase K of Fagus crenata (Japanese beech).